We begin with the raw amino-acid sequence, 86 residues long: UPF0297 protein SSP1144 (86 aa).

It belongs to the UPF0297 family.

The protein is UPF0297 protein SSP1144 of Staphylococcus saprophyticus subsp. saprophyticus (strain ATCC 15305 / DSM 20229 / NCIMB 8711 / NCTC 7292 / S-41).